A 103-amino-acid chain; its full sequence is Auxin-responsive protein SAUR50 (103 aa).

Belongs to the ARG7 family.

Effector of hormonal and environmental signals in plant growth. Involved in heliotropism. In Helianthus annuus (Common sunflower), this protein is Auxin-responsive protein SAUR50.